The chain runs to 814 residues: Pre-rRNA-processing protein TSR1 homolog (814 aa).

The tract at residues 1–67 (MADHAFHRPG…NQMNQLRKNK (67 aa)) is disordered. Basic residues predominate over residues 16–27 (NKAHKTGRHRSK). The region spanning 84 to 249 (APFLVCLLPM…MRRIGGQKKR (166 aa)) is the Bms1-type G domain. Disordered stretches follow at residues 316-357 (PYKL…DAEQ) and 392-448 (WIPD…EEFQ). Over residues 317–340 (YKLDKSRDGENSEVRLLDRSDPSK) the composition is skewed to basic and acidic residues. A compositionally biased stretch (acidic residues) spans 395–426 (DVEEVEDPDGKDDDDMSEDDDDDKEDDNEDFM). The span at 431-442 (KSFEDEYEKRDS) shows a compositional bias: basic and acidic residues. A Phosphothreonine modification is found at T444.

Belongs to the TRAFAC class translation factor GTPase superfamily. Bms1-like GTPase family. TSR1 subfamily.

It localises to the nucleus. Its subcellular location is the nucleolus. Required during maturation of the 40S ribosomal subunit in the nucleolus. The chain is Pre-rRNA-processing protein TSR1 homolog from Drosophila melanogaster (Fruit fly).